We begin with the raw amino-acid sequence, 573 residues long: Arylsulfatase I (573 aa).

Residues 1–23 (MHALTGLSLVSLLSFGYLSWDWA) form the signal peptide. Ca(2+) is bound by residues Asp56, Asp57, and Cys94. Cys94 acts as the Nucleophile in catalysis. Residue Cys94 is modified to 3-oxoalanine (Cys). Lys148 lines the substrate pocket. Residue His150 is part of the active site. His240 lines the substrate pocket. Asn277 and Asn289 each carry an N-linked (GlcNAc...) asparagine glycan. Ca(2+) is bound by residues Asp298 and Asn299. Position 316 (Lys316) interacts with substrate. Asn467 and Asn497 each carry an N-linked (GlcNAc...) asparagine glycan. Residues 516 to 550 (FNGGAWGPWASDEEEEEEEEEAGRARSFSRGRRKK) are disordered. Positions 526 to 536 (SDEEEEEEEEE) are enriched in acidic residues.

This sequence belongs to the sulfatase family. Requires Ca(2+) as cofactor. Post-translationally, the oxidation of Cys-94 residue to 3-oxoalanine (also known as C(alpha)-formylglycine) by SUMF1/Sulfatase-modifying factor 1, seems critical for catalytic activity.

The protein resides in the secreted. It is found in the endoplasmic reticulum. Functionally, displays arylsulfatase activity at neutral pH, when co-expressed with SUMF1; arylsulfatase activity is measured in the secretion medium of retinal cell line, but no activity is recorded when measured in cell extracts. The sequence is that of Arylsulfatase I (ARSI) from Canis lupus familiaris (Dog).